The chain runs to 105 residues: uncharacterized protein (105 aa).

This sequence belongs to the asfivirus C122R family.

The protein resides in the virion. This is an uncharacterized protein from African swine fever virus (strain Badajoz 1971 Vero-adapted) (Ba71V).